A 646-amino-acid chain; its full sequence is Exoribonuclease 2 (646 aa).

The 328-residue stretch at 191-518 folds into the RNB domain; the sequence is RIDLTALDFV…NHRLLKAIIQ (328 aa). The 83-residue stretch at 563 to 645 folds into the S1 motif domain; that stretch reads DKTFSAEIVD…ETRNIVARPV (83 aa).

This sequence belongs to the RNR ribonuclease family. RNase II subfamily.

The protein localises to the cytoplasm. It catalyses the reaction Exonucleolytic cleavage in the 3'- to 5'-direction to yield nucleoside 5'-phosphates.. In terms of biological role, involved in mRNA degradation. Hydrolyzes single-stranded polyribonucleotides processively in the 3' to 5' direction. This Xenorhabdus bovienii (strain SS-2004) (Xenorhabdus nematophila subsp. bovienii) protein is Exoribonuclease 2.